The chain runs to 339 residues: Phosphate acyltransferase (339 aa).

It belongs to the PlsX family. Homodimer. Probably interacts with PlsY.

The protein localises to the cytoplasm. It carries out the reaction a fatty acyl-[ACP] + phosphate = an acyl phosphate + holo-[ACP]. It functions in the pathway lipid metabolism; phospholipid metabolism. Functionally, catalyzes the reversible formation of acyl-phosphate (acyl-PO(4)) from acyl-[acyl-carrier-protein] (acyl-ACP). This enzyme utilizes acyl-ACP as fatty acyl donor, but not acyl-CoA. The protein is Phosphate acyltransferase of Pasteurella multocida (strain Pm70).